We begin with the raw amino-acid sequence, 197 residues long: Imidazoleglycerol-phosphate dehydratase (197 aa).

This sequence belongs to the imidazoleglycerol-phosphate dehydratase family.

It is found in the cytoplasm. It carries out the reaction D-erythro-1-(imidazol-4-yl)glycerol 3-phosphate = 3-(imidazol-4-yl)-2-oxopropyl phosphate + H2O. Its pathway is amino-acid biosynthesis; L-histidine biosynthesis; L-histidine from 5-phospho-alpha-D-ribose 1-diphosphate: step 6/9. The polypeptide is Imidazoleglycerol-phosphate dehydratase (Gloeobacter violaceus (strain ATCC 29082 / PCC 7421)).